Consider the following 214-residue polypeptide: Dephospho-CoA kinase (214 aa).

Residues 3–202 (KIGLTGGIGS…DRWLALAGAA (200 aa)) form the DPCK domain. ATP is bound at residue 11 to 16 (GSGKSR).

Belongs to the CoaE family.

The protein localises to the cytoplasm. The catalysed reaction is 3'-dephospho-CoA + ATP = ADP + CoA + H(+). It participates in cofactor biosynthesis; coenzyme A biosynthesis; CoA from (R)-pantothenate: step 5/5. Its function is as follows. Catalyzes the phosphorylation of the 3'-hydroxyl group of dephosphocoenzyme A to form coenzyme A. This is Dephospho-CoA kinase from Bordetella pertussis (strain Tohama I / ATCC BAA-589 / NCTC 13251).